The sequence spans 172 residues: Bone marrow stromal antigen 2 (172 aa).

At 1–30 the chain is on the cytoplasmic side; the sequence is MAPSFYHYLPVPMDEMGGKQGWGSHRQWLG. Residues 31–51 form a helical; Signal-anchor for type II membrane protein membrane-spanning segment; it reads AAILVVLFGVTLVILTIYFAV. Residues 52–152 lie on the Extracellular side of the membrane; that stretch reads TANSVACRDG…ETSSTVQVNS (101 aa). Residue Asn70 is glycosylated (N-linked (GlcNAc...) asparagine). A coiled-coil region spans residues 74-147; the sequence is LLQRQLTRTQ…LRIQKETSST (74 aa). An N-linked (GlcNAc...) asparagine; atypical glycan is attached at Asn94. A glycan (N-linked (GlcNAc...) asparagine) is linked at Asn97. A lipid anchor (GPI-anchor amidated serine) is attached at Ser152. Positions 153 to 172 are cleaved as a propeptide — removed in mature form; the sequence is GSSMVVSSLLVLKVSLFLLF.

Parallel homodimer; disulfide-linked. May form homotetramers under reducing conditions. Isoform 1 and isoform 2 form homodimers and also heterodimers with each other. Dimerization is essential for its antiviral activity. Interacts (via cytoplasmic domain) with ARHGAP44. Interacts with MMP14 (via C-terminal cytoplasmic tail). Interacts with LILRA4/ILT7. Interacts with RNF115. In terms of tissue distribution, in naive mice, specifically expressed on type I interferon-producing cells (at protein level).

It is found in the golgi apparatus. The protein localises to the trans-Golgi network. It localises to the cell membrane. The protein resides in the late endosome. Its subcellular location is the membrane raft. It is found in the cytoplasm. The protein localises to the apical cell membrane. Functionally, IFN-induced antiviral host restriction factor which efficiently blocks the release of diverse mammalian enveloped viruses by directly tethering nascent virions to the membranes of infected cells. Acts as a direct physical tether, holding virions to the cell membrane and linking virions to each other. The tethered virions can be internalized by endocytosis and subsequently degraded or they can remain on the cell surface. In either case, their spread as cell-free virions is restricted. Its target viruses belong to diverse families, including retroviridae: human immunodeficiency virus type 1 (HIV-1), mouse mammary tumor virus (MMTV) and murine leukemia virus (MLV), filoviridae: ebola virus (EBOV), arenaviridae: lassa virus (LASV), and rhabdoviridae: vesicular stomatitis virus (VSV). Can inhibit cell surface proteolytic activity of MMP14 causing decreased activation of MMP15 which results in inhibition of cell growth and migration. Can stimulate signaling by LILRA4/ILT7 and consequently provide negative feedback to the production of IFN by plasmacytoid dendritic cells in response to viral infection. Plays a role in the organization of the subapical actin cytoskeleton in polarized epithelial cells. The polypeptide is Bone marrow stromal antigen 2 (Bst2) (Mus musculus (Mouse)).